The chain runs to 554 residues: Dihydroxy-acid dehydratase (554 aa).

D78 is a binding site for Mg(2+). Residue C119 participates in [2Fe-2S] cluster binding. Residues D120 and K121 each contribute to the Mg(2+) site. The residue at position 121 (K121) is an N6-carboxylysine. C191 lines the [2Fe-2S] cluster pocket. Residue E442 coordinates Mg(2+). The Proton acceptor role is filled by S468.

Belongs to the IlvD/Edd family. In terms of assembly, homodimer. The cofactor is [2Fe-2S] cluster. Requires Mg(2+) as cofactor.

The catalysed reaction is (2R)-2,3-dihydroxy-3-methylbutanoate = 3-methyl-2-oxobutanoate + H2O. The enzyme catalyses (2R,3R)-2,3-dihydroxy-3-methylpentanoate = (S)-3-methyl-2-oxopentanoate + H2O. Its pathway is amino-acid biosynthesis; L-isoleucine biosynthesis; L-isoleucine from 2-oxobutanoate: step 3/4. It participates in amino-acid biosynthesis; L-valine biosynthesis; L-valine from pyruvate: step 3/4. Functions in the biosynthesis of branched-chain amino acids. Catalyzes the dehydration of (2R,3R)-2,3-dihydroxy-3-methylpentanoate (2,3-dihydroxy-3-methylvalerate) into 2-oxo-3-methylpentanoate (2-oxo-3-methylvalerate) and of (2R)-2,3-dihydroxy-3-methylbutanoate (2,3-dihydroxyisovalerate) into 2-oxo-3-methylbutanoate (2-oxoisovalerate), the penultimate precursor to L-isoleucine and L-valine, respectively. This is Dihydroxy-acid dehydratase from Acetivibrio thermocellus (strain ATCC 27405 / DSM 1237 / JCM 9322 / NBRC 103400 / NCIMB 10682 / NRRL B-4536 / VPI 7372) (Clostridium thermocellum).